The chain runs to 66 residues: UPF0337 protein M6_Spy1542 (66 aa).

Residues 1–10 (MSEEKLKAKV) show a composition bias toward basic and acidic residues. Residues 1 to 22 (MSEEKLKAKVEQASGSLKEGAG) are disordered.

It belongs to the UPF0337 (CsbD) family.

The protein is UPF0337 protein M6_Spy1542 of Streptococcus pyogenes serotype M6 (strain ATCC BAA-946 / MGAS10394).